The following is an 882-amino-acid chain: Valine--tRNA ligase (882 aa).

The 'HIGH' region motif lies at 45-55 (PNVTGKLHLGH). The short motif at 519 to 523 (KMSKS) is the 'KMSKS' region element. Lysine 522 is an ATP binding site. Residues 808–877 (LADLLNVEEE…DATQERIVEM (70 aa)) are a coiled coil.

It belongs to the class-I aminoacyl-tRNA synthetase family. ValS type 1 subfamily. As to quaternary structure, monomer.

Its subcellular location is the cytoplasm. It catalyses the reaction tRNA(Val) + L-valine + ATP = L-valyl-tRNA(Val) + AMP + diphosphate. Catalyzes the attachment of valine to tRNA(Val). As ValRS can inadvertently accommodate and process structurally similar amino acids such as threonine, to avoid such errors, it has a 'posttransfer' editing activity that hydrolyzes mischarged Thr-tRNA(Val) in a tRNA-dependent manner. This is Valine--tRNA ligase from Streptococcus pyogenes serotype M6 (strain ATCC BAA-946 / MGAS10394).